The primary structure comprises 167 residues: ATP synthase subunit b (167 aa).

The chain crosses the membrane as a helical span at residues 9 to 29 (ALPLGNMLFIIIAFLLLMLIL).

The protein belongs to the ATPase B chain family. As to quaternary structure, F-type ATPases have 2 components, F(1) - the catalytic core - and F(0) - the membrane proton channel. F(1) has five subunits: alpha(3), beta(3), gamma(1), delta(1), epsilon(1). F(0) has three main subunits: a(1), b(2) and c(10-14). The alpha and beta chains form an alternating ring which encloses part of the gamma chain. F(1) is attached to F(0) by a central stalk formed by the gamma and epsilon chains, while a peripheral stalk is formed by the delta and b chains.

It is found in the cell membrane. Its function is as follows. F(1)F(0) ATP synthase produces ATP from ADP in the presence of a proton or sodium gradient. F-type ATPases consist of two structural domains, F(1) containing the extramembraneous catalytic core and F(0) containing the membrane proton channel, linked together by a central stalk and a peripheral stalk. During catalysis, ATP synthesis in the catalytic domain of F(1) is coupled via a rotary mechanism of the central stalk subunits to proton translocation. Functionally, component of the F(0) channel, it forms part of the peripheral stalk, linking F(1) to F(0). The chain is ATP synthase subunit b from Leuconostoc mesenteroides subsp. mesenteroides (strain ATCC 8293 / DSM 20343 / BCRC 11652 / CCM 1803 / JCM 6124 / NCDO 523 / NBRC 100496 / NCIMB 8023 / NCTC 12954 / NRRL B-1118 / 37Y).